We begin with the raw amino-acid sequence, 211 residues long: Histone H1t (211 aa).

A1 carries the post-translational modification N-acetylalanine. Positions 1 to 16 (AETAPAAPADSVPASV) are enriched in low complexity. Residues 1–42 (AETAPAAPADSVPASVEKPPAKKRGKKPVGLTGTSRKAPSAS) form a disordered region. The segment covering 32-42 (TGTSRKAPSAS) has biased composition (polar residues). An H15 domain is found at 39–112 (PSASVSKLIT…GASGSFKLSK (74 aa)). At R57 the chain carries Citrulline. The interval 101-211 (GTGASGSFKL…TNPRKATNRK (111 aa)) is disordered. Positions 121–135 (GKVKKPAAAKTKKLV) are enriched in basic residues. S142 is subject to Phosphoserine. Basic residues predominate over residues 147 to 156 (KANKRAKKSR). T158 carries the phosphothreonine modification. Phosphoserine is present on residues S166 and S181. The span at 176-189 (KQQRKSPAKARAAK) shows a compositional bias: basic residues.

The protein belongs to the histone H1/H5 family. Post-translationally, phosphorylated in early spermatids. In terms of processing, citrullination at Arg-57 (H1R54ci) by PADI4 takes place within the DNA-binding site of H1 and results in its displacement from chromatin and global chromatin decondensation, thereby promoting pluripotency and stem cell maintenance. As to expression, testis-specific.

It localises to the nucleus. The protein resides in the chromosome. Testis-specific histone H1 that forms less compacted chromatin compared to other H1 histone subtypes. Formation of more relaxed chromatin may be required to promote chromatin architecture required for proper chromosome regulation during meiosis, such as homologous recombination. Histones H1 act as linkers that bind to nucleosomes and compact polynucleosomes into a higher-order chromatin configuration. The sequence is that of Histone H1t from Sus scrofa (Pig).